Here is a 793-residue protein sequence, read N- to C-terminus: Phenylalanine--tRNA ligase beta subunit (793 aa).

The region spanning 39–148 (AGQFTHVIVA…DEAPIGMDLR (110 aa)) is the tRNA-binding domain. A B5 domain is found at 401 to 477 (PGTVSFLFDT…RLYGYDKLQA (77 aa)). D455, D461, E464, and E465 together coordinate Mg(2+). Positions 698–792 (SKYPQIRRDL…LENEFSILLR (95 aa)) constitute an FDX-ACB domain.

Belongs to the phenylalanyl-tRNA synthetase beta subunit family. Type 1 subfamily. As to quaternary structure, tetramer of two alpha and two beta subunits. The cofactor is Mg(2+).

It localises to the cytoplasm. It catalyses the reaction tRNA(Phe) + L-phenylalanine + ATP = L-phenylalanyl-tRNA(Phe) + AMP + diphosphate + H(+). This chain is Phenylalanine--tRNA ligase beta subunit, found in Legionella pneumophila (strain Paris).